Here is a 126-residue protein sequence, read N- to C-terminus: Large ribosomal subunit protein bL12 (126 aa).

Residues 104–116 show a composition bias toward basic and acidic residues; sequence AKKEDAEKAKAQL. Residues 104 to 126 are disordered; it reads AKKEDAEKAKAQLEEAGATVELK. Residues 117–126 are compositionally biased toward low complexity; the sequence is EEAGATVELK.

The protein belongs to the bacterial ribosomal protein bL12 family. Homodimer. Part of the ribosomal stalk of the 50S ribosomal subunit. Forms a multimeric L10(L12)X complex, where L10 forms an elongated spine to which 2 to 4 L12 dimers bind in a sequential fashion. Binds GTP-bound translation factors.

Functionally, forms part of the ribosomal stalk which helps the ribosome interact with GTP-bound translation factors. Is thus essential for accurate translation. This chain is Large ribosomal subunit protein bL12, found in Bifidobacterium animalis subsp. lactis (strain AD011).